We begin with the raw amino-acid sequence, 289 residues long: Glycine--tRNA ligase alpha subunit (289 aa).

Belongs to the class-II aminoacyl-tRNA synthetase family. In terms of assembly, tetramer of two alpha and two beta subunits.

Its subcellular location is the cytoplasm. It catalyses the reaction tRNA(Gly) + glycine + ATP = glycyl-tRNA(Gly) + AMP + diphosphate. The chain is Glycine--tRNA ligase alpha subunit from Rickettsia akari (strain Hartford).